Reading from the N-terminus, the 129-residue chain is L-ectoine synthase (129 aa).

Belongs to the ectoine synthase family.

The enzyme catalyses (2S)-4-acetamido-2-aminobutanoate = L-ectoine + H2O. Its pathway is amine and polyamine biosynthesis; ectoine biosynthesis; L-ectoine from L-aspartate 4-semialdehyde: step 3/3. In terms of biological role, catalyzes the circularization of gamma-N-acetyl-alpha,gamma-diaminobutyric acid (ADABA) to ectoine (1,4,5,6-tetrahydro-2-methyl-4-pyrimidine carboxylic acid), which is an excellent osmoprotectant. The protein is L-ectoine synthase of Mycobacterium sp. (strain KMS).